The primary structure comprises 174 residues: MKVIKKTVLLKVYEPNKGKKECLDRVIDLYAKTLDFYLDVIKKAGIYRIVALARKKKERKSGRKSNYALNLLEKLTVPTQAHPNPLYPIPFSVRVDIRRSAINQAIGMVSSYVSNLKNWYEEGKELGHSKPSYPNPKSYSPQLYSTLVELDDLLVRENKEFHFVRIKVLNEKER.

This is an uncharacterized protein from Aquifex aeolicus (strain VF5).